A 60-amino-acid polypeptide reads, in one-letter code: MAKKGNRIQVILECTEHKASGVAGTSRYITTKNKKNTPDRLEIKKFNPVLKRVTVHKEIK.

The protein belongs to the bacterial ribosomal protein bL33 family.

The chain is Large ribosomal subunit protein bL33 from Flavobacterium psychrophilum (strain ATCC 49511 / DSM 21280 / CIP 103535 / JIP02/86).